Reading from the N-terminus, the 526-residue chain is Variant surface glycoprotein MITAT 1.4A (526 aa).

Positions 1–33 (MDCHTKETLGVTQWRRSTMLTLSLLYAITPADG) are cleaved as a signal peptide. 2 disulfide bridges follow: cysteine 47/cysteine 173 and cysteine 154/cysteine 215. A disordered region spans residues 157-193 (NEGGDGDGKDQLAPKGCRHGTEADFDAGAGPAESEVA). Asparagine 453 carries an N-linked (GlcNAc...) asparagine glycan. Aspartate 503 carries GPI-anchor amidated aspartate lipidation. The propeptide at 504 to 526 (SSILVTKKFALTVVSAAFVALLF) is removed in mature form.

The protein resides in the cell membrane. Functionally, VSG forms a coat on the surface of the parasite. The trypanosome evades the immune response of the host by expressing a series of antigenically distinct VSGs from an estimated 1000 VSG genes. The protein is Variant surface glycoprotein MITAT 1.4A of Trypanosoma brucei brucei.